A 445-amino-acid chain; its full sequence is Phosphoglucosamine mutase (445 aa).

Catalysis depends on Ser-102, which acts as the Phosphoserine intermediate. 4 residues coordinate Mg(2+): Ser-102, Asp-241, Asp-243, and Asp-245. A Phosphoserine modification is found at Ser-102.

The protein belongs to the phosphohexose mutase family. Mg(2+) is required as a cofactor. Activated by phosphorylation.

The catalysed reaction is alpha-D-glucosamine 1-phosphate = D-glucosamine 6-phosphate. In terms of biological role, catalyzes the conversion of glucosamine-6-phosphate to glucosamine-1-phosphate. In Variovorax paradoxus (strain S110), this protein is Phosphoglucosamine mutase.